A 468-amino-acid polypeptide reads, in one-letter code: Methionine aminopeptidase 2 (468 aa).

A compositionally biased stretch (basic and acidic residues) spans 1–10 (MGSKTFEGEG). Residues 1–106 (MGSKTFEGEG…PPRVPLDDLF (106 aa)) form a disordered region. Residues 16 to 25 (DPSNSTSPNS) are compositionally biased toward polar residues. Over residues 31-40 (RGAHLSRDGD) the composition is skewed to basic and acidic residues. The span at 46–56 (GDGDDGADGDE) shows a compositional bias: acidic residues. The span at 61 to 75 (VTTTPLTEQQPSSET) shows a compositional bias: polar residues. The segment covering 78-90 (KKKKRRKPKKKIS) has biased composition (basic residues). A substrate-binding site is contributed by His219. Asp240, Asp251, and His320 together coordinate a divalent metal cation. Position 328 (His328) interacts with substrate. A divalent metal cation contacts are provided by Glu353 and Glu449.

It belongs to the peptidase M24A family. Methionine aminopeptidase eukaryotic type 2 subfamily. Co(2+) is required as a cofactor. Zn(2+) serves as cofactor. Requires Mn(2+) as cofactor. It depends on Fe(2+) as a cofactor.

Its subcellular location is the cytoplasm. It carries out the reaction Release of N-terminal amino acids, preferentially methionine, from peptides and arylamides.. Functionally, cotranslationally removes the N-terminal methionine from nascent proteins. The N-terminal methionine is often cleaved when the second residue in the primary sequence is small and uncharged (Met-Ala-, Cys, Gly, Pro, Ser, Thr, or Val). The sequence is that of Methionine aminopeptidase 2 from Aspergillus oryzae (strain ATCC 42149 / RIB 40) (Yellow koji mold).